Here is a 367-residue protein sequence, read N- to C-terminus: tRNA 2-selenouridine synthase (367 aa).

Positions 12–136 (FLNDRPLMDA…LRGFLIDTLE (125 aa)) constitute a Rhodanese domain. Cys-95 acts as the S-selanylcysteine intermediate in catalysis.

This sequence belongs to the SelU family. In terms of assembly, monomer.

It catalyses the reaction 5-methylaminomethyl-2-thiouridine(34) in tRNA + selenophosphate + (2E)-geranyl diphosphate + H2O + H(+) = 5-methylaminomethyl-2-selenouridine(34) in tRNA + (2E)-thiogeraniol + phosphate + diphosphate. The enzyme catalyses 5-methylaminomethyl-2-thiouridine(34) in tRNA + (2E)-geranyl diphosphate = 5-methylaminomethyl-S-(2E)-geranyl-thiouridine(34) in tRNA + diphosphate. The catalysed reaction is 5-methylaminomethyl-S-(2E)-geranyl-thiouridine(34) in tRNA + selenophosphate + H(+) = 5-methylaminomethyl-2-(Se-phospho)selenouridine(34) in tRNA + (2E)-thiogeraniol. It carries out the reaction 5-methylaminomethyl-2-(Se-phospho)selenouridine(34) in tRNA + H2O = 5-methylaminomethyl-2-selenouridine(34) in tRNA + phosphate. In terms of biological role, involved in the post-transcriptional modification of the uridine at the wobble position (U34) of tRNA(Lys), tRNA(Glu) and tRNA(Gln). Catalyzes the conversion of 2-thiouridine (S2U-RNA) to 2-selenouridine (Se2U-RNA). Acts in a two-step process involving geranylation of 2-thiouridine (S2U) to S-geranyl-2-thiouridine (geS2U) and subsequent selenation of the latter derivative to 2-selenouridine (Se2U) in the tRNA chain. The polypeptide is tRNA 2-selenouridine synthase (Pseudomonas fluorescens (strain Pf0-1)).